A 633-amino-acid polypeptide reads, in one-letter code: Shootin-1 (633 aa).

Met1 carries the N-acetylmethionine modification. Phosphoserine is present on residues Ser3 and Ser4. Positions 7 to 353 (EKQLQLITSL…RVNQSENSVP (347 aa)) form a coiled coil. Residues Ser101 and Ser249 each carry the phosphoserine; by PAK1 modification. The interval 343-508 (KRVNQSENSV…LATSESKSMP (166 aa)) is disordered. A compositionally biased stretch (pro residues) spans 352–369 (VPPPPPPPPPLPPPPPNP). Residue Ser375 is modified to Phosphoserine. A compositionally biased stretch (basic and acidic residues) spans 403-418 (TDLKRQAVEEMMDRIK). The segment covering 456–465 (LNKSTSSRSL) has biased composition (polar residues). Ser473 is subject to Phosphoserine. Thr487 bears the Phosphothreonine mark. Residues 490 to 505 (ADSSSPTGILATSESK) are compositionally biased toward polar residues. Ser494 carries the phosphoserine modification. Thr496 bears the Phosphothreonine mark. Phosphoserine is present on residues Ser506 and Ser515. The segment at 525-633 (TLEAEFNNPC…KTGETDSSNC (109 aa)) is disordered. Thr537 is modified (phosphothreonine). Residues 550–559 (CTNSKVTFQP) are compositionally biased toward polar residues. Over residues 590–621 (PQTKDQAAEKDPTQCKEEERGETQPEFKEDSS) the composition is skewed to basic and acidic residues.

The protein belongs to the shootin family. In terms of assembly, interacts with PFN2. Interacts (via N-terminus) with KIF20B; this interaction is direct and promotes the association of SHTN1 to microtubules in primary neurons. Associates with microtubule. Interacts with L1CAM; this interaction occurs in axonal growth cones. Interacts with actin filament retrograde flow; this interaction is enhanced in a netrin-1- and PAK1-dependent manner and promotes F-actin-substrate coupling and concomitant formation of traction forces at axonal growth cones. Interacts with RUFY3. In terms of processing, phosphorylated on Ser-101 and Ser-249 by PAK1 through a CDC42- and RAC1-dependent signaling pathway, which enhances its association with F-actin retrograde flow in filopodia and lamellipodia of axonal growth cones. Phosphorylation on Ser-101 and Ser-249 is increased by netrin-1. As to expression, brain-specific (at protein level). Expressed in hippocampal neurons.

It is found in the perikaryon. The protein localises to the cell projection. Its subcellular location is the axon. It localises to the growth cone. The protein resides in the cytoplasm. It is found in the cytoskeleton. The protein localises to the filopodium. Its subcellular location is the lamellipodium. Involved in the generation of internal asymmetric signals required for neuronal polarization and neurite outgrowth. Mediates netrin-1-induced F-actin-substrate coupling or 'clutch engagement' within the axon growth cone through activation of CDC42, RAC1 and PAK1-dependent signaling pathway, thereby converting the F-actin retrograde flow into traction forces, concomitantly with filopodium extension and axon outgrowth. Plays a role in cytoskeletal organization by regulating the subcellular localization of phosphoinositide 3-kinase (PI3K) activity at the axonal growth cone. Also plays a role in regenerative neurite outgrowth. In the developing cortex, cooperates with KIF20B to promote both the transition from the multipolar to the bipolar stage and the radial migration of cortical neurons from the ventricular zone toward the superficial layer of the neocortex. Involved in the accumulation of phosphatidylinositol 3,4,5-trisphosphate (PIP3) in the growth cone of primary hippocampal neurons. The polypeptide is Shootin-1 (Rattus norvegicus (Rat)).